Here is a 187-residue protein sequence, read N- to C-terminus: ATP synthase subunit b (187 aa).

A helical transmembrane segment spans residues 31 to 51; that stretch reads VAIMGLAIFVLFLILSYLLFN.

This sequence belongs to the ATPase B chain family. As to quaternary structure, F-type ATPases have 2 components, F(1) - the catalytic core - and F(0) - the membrane proton channel. F(1) has five subunits: alpha(3), beta(3), gamma(1), delta(1), epsilon(1). F(0) has three main subunits: a(1), b(2) and c(10-14). The alpha and beta chains form an alternating ring which encloses part of the gamma chain. F(1) is attached to F(0) by a central stalk formed by the gamma and epsilon chains, while a peripheral stalk is formed by the delta and b chains.

It is found in the cell membrane. Its function is as follows. F(1)F(0) ATP synthase produces ATP from ADP in the presence of a proton or sodium gradient. F-type ATPases consist of two structural domains, F(1) containing the extramembraneous catalytic core and F(0) containing the membrane proton channel, linked together by a central stalk and a peripheral stalk. During catalysis, ATP synthesis in the catalytic domain of F(1) is coupled via a rotary mechanism of the central stalk subunits to proton translocation. In terms of biological role, component of the F(0) channel, it forms part of the peripheral stalk, linking F(1) to F(0). This is ATP synthase subunit b from Lachnoclostridium phytofermentans (strain ATCC 700394 / DSM 18823 / ISDg) (Clostridium phytofermentans).